Here is a 139-residue protein sequence, read N- to C-terminus: GYLGGYAAPALAYGAAAVAPAAITSQQSNILRSYGNLGQVSTYSKTVDTPYSSVSKADIRVTNNAVYAAPAAYAAAPVAYAAPALGYARTALAAPALGYARAAYAAPAVAAGGLLGVAYSAAPAVAHLTYSGLHAAYAY.

6 repeat units span residues 7-10, 68-71, 75-78, 93-95, 105-108, and 121-124.

Functionally, component of the cuticle of migratory locust which contains more than 100 different structural proteins. In Locusta migratoria (Migratory locust), this protein is Cuticle protein 76.